A 578-amino-acid polypeptide reads, in one-letter code: Septation ring formation regulator EzrA (578 aa).

The Extracellular portion of the chain corresponds to 1-8 (MKNNWIII). Residues 9-27 (LVLVIVIIAAVLYLIGYFM) traverse the membrane as a helical segment. The Cytoplasmic portion of the chain corresponds to 28 to 578 (RKKNQEQLDE…NINNPNLTAI (551 aa)). 3 coiled-coil regions span residues 103 to 165 (RFMK…DDKA), 256 to 285 (QNFA…AAVE), and 394 to 490 (KILD…DDLE).

This sequence belongs to the EzrA family.

It localises to the cell membrane. Functionally, negative regulator of FtsZ ring formation; modulates the frequency and position of FtsZ ring formation. Inhibits FtsZ ring formation at polar sites. Interacts either with FtsZ or with one of its binding partners to promote depolymerization. This is Septation ring formation regulator EzrA from Enterococcus faecalis (strain ATCC 700802 / V583).